The sequence spans 345 residues: NADPH dehydrogenase (345 aa).

23–26 (SPMC) provides a ligand contact to FMN. Tyr-28 contributes to the substrate binding site. FMN contacts are provided by Ala-60 and Gln-102. 164-167 (HGAH) serves as a coordination point for substrate. Residues Arg-215 and 307–308 (GR) each bind FMN.

It belongs to the NADH:flavin oxidoreductase/NADH oxidase family. NamA subfamily. As to quaternary structure, homotetramer. FMN serves as cofactor.

It catalyses the reaction A + NADPH + H(+) = AH2 + NADP(+). Functionally, catalyzes the reduction of the double bond of an array of alpha,beta-unsaturated aldehydes and ketones. It also reduces the nitro group of nitroester and nitroaromatic compounds. It could have a role in detoxification processes. The sequence is that of NADPH dehydrogenase from Bacillus cereus (strain G9842).